The following is a 66-amino-acid chain: uncharacterized protein (66 aa).

The next 2 helical transmembrane spans lie at 5 to 25 and 30 to 50; these read ALIV…PLVN and IMFG…VTPL.

Its subcellular location is the cell membrane. This is an uncharacterized protein from Bacillus subtilis (strain 168).